The following is a 178-amino-acid chain: Nascent polypeptide-associated complex subunit alpha (178 aa).

The NAC-A/B domain maps to proline 16 to isoleucine 80. Over residues glutamate 82–alanine 100 the composition is skewed to low complexity. Residues glutamate 82–isoleucine 145 form a disordered region. Basic and acidic residues predominate over residues glycine 101–glutamate 126. Positions aspartate 127–glycine 139 are enriched in acidic residues. The region spanning leucine 140–serine 178 is the UBA domain.

The protein belongs to the NAC-alpha family. In terms of assembly, part of the nascent polypeptide-associated complex (NAC), consisting of EGD2 and EGD1. NAC associates with ribosomes via EGD1.

The protein resides in the cytoplasm. It is found in the nucleus. Component of the nascent polypeptide-associated complex (NAC), a dynamic component of the ribosomal exit tunnel, protecting the emerging polypeptides from interaction with other cytoplasmic proteins to ensure appropriate nascent protein targeting. The NAC complex also promotes mitochondrial protein import by enhancing productive ribosome interactions with the outer mitochondrial membrane and blocks the inappropriate interaction of ribosomes translating non-secretory nascent polypeptides with translocation sites in the membrane of the endoplasmic reticulum. EGD2 may also be involved in transcription regulation. This Candida albicans (strain SC5314 / ATCC MYA-2876) (Yeast) protein is Nascent polypeptide-associated complex subunit alpha (EGD2).